The following is a 214-amino-acid chain: uncharacterized protein (214 aa).

An N-terminal signal peptide occupies residues 1-15 (MRPLILSIFALFLAG). Residue cysteine 16 is the site of N-palmitoyl cysteine attachment. A lipid anchor (S-diacylglycerol cysteine) is attached at cysteine 16.

This sequence to E.coli YjbF.

Its subcellular location is the cell membrane. This is an uncharacterized protein from Escherichia coli (strain K12).